A 350-amino-acid polypeptide reads, in one-letter code: Serine/arginine-rich splicing factor RS40 (350 aa).

RRM domains follow at residues 2 to 74 (KPVF…WTKS) and 97 to 168 (KTLF…YAVK). 2 stretches are compositionally biased toward basic and acidic residues: residues 73 to 82 (KSERGGDKRS) and 167 to 187 (VKDDDARGNGHSPERRRDRSP). Disordered regions lie at residues 73–94 (KSERGGDKRSGGGSRRSSSSMR) and 167–350 (VKDD…PADE). Serine 193, serine 195, and serine 211 each carry phosphoserine. Basic and acidic residues-rich tracts occupy residues 216 to 227 (YRKERTSPDYGR) and 240 to 255 (GSPEYGRDRRGNDSPR). 7 positions are modified to phosphoserine: serine 241, serine 262, serine 278, serine 298, serine 308, serine 335, and serine 340. Basic and acidic residues predominate over residues 272–289 (NKRERMSPNHSPFKKESP). The segment covering 299–308 (PIERRERSRS) has biased composition (basic and acidic residues).

The protein belongs to the splicing factor SR family. RS subfamily. As to quaternary structure, component of the spliceosome. Interacts with SNRNP35. Interacts with CYP59. Interacts with RCF3 and CPL1. Interacts with DRB1/HYL1 and SE. Highly expressed in roots and flowers. A presumably longer alternatively spliced form is found in leaves, stems and flowers.

The protein localises to the nucleus. The protein resides in the nucleus speckle. Functionally, required for constitutive and alternative pre-mRNA splicing. Involved in primary miRNA processing and pri-miRNA biogenesis. Binds both intronless and intron-containing pri-miRNAs. The sequence is that of Serine/arginine-rich splicing factor RS40 (RS40) from Arabidopsis thaliana (Mouse-ear cress).